The chain runs to 92 residues: Acylphosphatase (92 aa).

An Acylphosphatase-like domain is found at 7–92 (KTRCTISGRV…DPAPAEFSVG (86 aa)). Residues Arg-22 and Asn-40 contribute to the active site.

It belongs to the acylphosphatase family.

The enzyme catalyses an acyl phosphate + H2O = a carboxylate + phosphate + H(+). The protein is Acylphosphatase (acyP) of Halorhodospira halophila (strain DSM 244 / SL1) (Ectothiorhodospira halophila (strain DSM 244 / SL1)).